Reading from the N-terminus, the 125-residue chain is Interleukin-6 (125 aa).

Cysteines 16 and 26 form a disulfide.

This sequence belongs to the IL-6 superfamily. In terms of assembly, component of a hexamer of two molecules each of IL6, IL6R and IL6ST; first binds to IL6R to associate with the signaling subunit IL6ST. Interacts with IL6R (via the N-terminal ectodomain); this interaction may be affected by IL6R-binding with SORL1, hence decreasing IL6 cis signaling. Interacts with SORL1 (via the N-terminal ectodomain); this interaction leads to IL6 internalization and lysosomal degradation. May form a trimeric complex with the soluble SORL1 ectodomain and soluble IL6R receptor; this interaction might stabilize circulating IL6, hence promoting IL6 trans signaling.

The protein resides in the secreted. Functionally, cytokine with a wide variety of biological functions in immunity, tissue regeneration, and metabolism. Binds to IL6R, then the complex associates to the signaling subunit IL6ST/gp130 to trigger the intracellular IL6-signaling pathway. The interaction with the membrane-bound IL6R and IL6ST stimulates 'classic signaling', whereas the binding of IL6 and soluble IL6R to IL6ST stimulates 'trans-signaling'. Alternatively, 'cluster signaling' occurs when membrane-bound IL6:IL6R complexes on transmitter cells activate IL6ST receptors on neighboring receiver cells. IL6 is a potent inducer of the acute phase response. Rapid production of IL6 contributes to host defense during infection and tissue injury, but excessive IL6 synthesis is involved in disease pathology. In the innate immune response, is synthesized by myeloid cells, such as macrophages and dendritic cells, upon recognition of pathogens through toll-like receptors (TLRs) at the site of infection or tissue injury. In the adaptive immune response, is required for the differentiation of B cells into immunoglobulin-secreting cells. Plays a major role in the differentiation of CD4(+) T cell subsets. Essential factor for the development of T follicular helper (Tfh) cells that are required for the induction of germinal-center formation. Required to drive naive CD4(+) T cells to the Th17 lineage. Also required for proliferation of myeloma cells and the survival of plasmablast cells. Its function is as follows. Acts as an essential factor in bone homeostasis and on vessels directly or indirectly by induction of VEGF, resulting in increased angiogenesis activity and vascular permeability. Induces, through 'trans-signaling' and synergistically with IL1B and TNF, the production of VEGF. Involved in metabolic controls, is discharged into the bloodstream after muscle contraction increasing lipolysis and improving insulin resistance. 'Trans-signaling' in central nervous system also regulates energy and glucose homeostasis. Mediates, through GLP-1, crosstalk between insulin-sensitive tissues, intestinal L cells and pancreatic islets to adapt to changes in insulin demand. Also acts as a myokine. Plays a protective role during liver injury, being required for maintenance of tissue regeneration. Also has a pivotal role in iron metabolism by regulating HAMP/hepcidin expression upon inflammation or bacterial infection. Through activation of IL6ST-YAP-NOTCH pathway, induces inflammation-induced epithelial regeneration. The chain is Interleukin-6 (IL6) from Neovison vison (American mink).